The primary structure comprises 341 residues: DNA-directed RNA polymerase subunit alpha (341 aa).

Positions 1–226 are alpha N-terminal domain (alpha-NTD); it reads MLIAQRPTIT…ELFGLVRELN (226 aa). An alpha C-terminal domain (alpha-CTD) region spans residues 241–341; the sequence is AALAADLALP…DQRYIETEQL (101 aa).

It belongs to the RNA polymerase alpha chain family. In terms of assembly, homodimer. The RNAP catalytic core consists of 2 alpha, 1 beta, 1 beta' and 1 omega subunit. When a sigma factor is associated with the core the holoenzyme is formed, which can initiate transcription.

It catalyses the reaction RNA(n) + a ribonucleoside 5'-triphosphate = RNA(n+1) + diphosphate. DNA-dependent RNA polymerase catalyzes the transcription of DNA into RNA using the four ribonucleoside triphosphates as substrates. The sequence is that of DNA-directed RNA polymerase subunit alpha from Acidothermus cellulolyticus (strain ATCC 43068 / DSM 8971 / 11B).